The primary structure comprises 974 residues: Serine/threonine-protein kinase 10 (974 aa).

One can recognise a Protein kinase domain in the interval W37–V295. Residues L43 to V51 and K66 each bind ATP. D158 serves as the catalytic Proton acceptor. Residues E320 to A332 show a composition bias toward acidic residues. Positions E320–Q479 are disordered. The span at D343 to N353 shows a compositional bias: polar residues. Basic and acidic residues-rich tracts occupy residues P382–A406 and T458–E477. Coiled coils occupy residues Q605–K729 and E870–K950.

It belongs to the protein kinase superfamily. STE Ser/Thr protein kinase family. STE20 subfamily. Homodimer. Autophosphorylates.

It is found in the cell membrane. It catalyses the reaction L-seryl-[protein] + ATP = O-phospho-L-seryl-[protein] + ADP + H(+). It carries out the reaction L-threonyl-[protein] + ATP = O-phospho-L-threonyl-[protein] + ADP + H(+). May act as a polo kinase kinase by mediating phosphorylation of plk1. The protein is Serine/threonine-protein kinase 10 (stk10) of Danio rerio (Zebrafish).